The sequence spans 192 residues: Peptidyl-prolyl cis-trans isomerase 1 (192 aa).

The region spanning 25 to 188 is the PPIase cyclophilin-type domain; that stretch reads FFDVSIGEEP…KTVTIADCGE (164 aa).

It belongs to the cyclophilin-type PPIase family.

The enzyme catalyses [protein]-peptidylproline (omega=180) = [protein]-peptidylproline (omega=0). Functionally, PPIases accelerate the folding of proteins. It catalyzes the cis-trans isomerization of proline imidic peptide bonds in oligopeptides. The protein is Peptidyl-prolyl cis-trans isomerase 1 (cyn-1) of Caenorhabditis elegans.